We begin with the raw amino-acid sequence, 119 residues long: Small ribosomal subunit protein bS16 (119 aa).

Belongs to the bacterial ribosomal protein bS16 family.

This chain is Small ribosomal subunit protein bS16, found in Chlamydia caviae (strain ATCC VR-813 / DSM 19441 / 03DC25 / GPIC) (Chlamydophila caviae).